The chain runs to 547 residues: Glucose-6-phosphate isomerase (547 aa).

E351 serves as the catalytic Proton donor. Active-site residues include H382 and K509.

It belongs to the GPI family.

It is found in the cytoplasm. It catalyses the reaction alpha-D-glucose 6-phosphate = beta-D-fructose 6-phosphate. Its pathway is carbohydrate biosynthesis; gluconeogenesis. The protein operates within carbohydrate degradation; glycolysis; D-glyceraldehyde 3-phosphate and glycerone phosphate from D-glucose: step 2/4. Its function is as follows. Catalyzes the reversible isomerization of glucose-6-phosphate to fructose-6-phosphate. The polypeptide is Glucose-6-phosphate isomerase (Coxiella burnetii (strain CbuG_Q212) (Coxiella burnetii (strain Q212))).